Reading from the N-terminus, the 473-residue chain is ATP synthase subunit beta (473 aa).

An ATP-binding site is contributed by 158-165 (GGAGVGKT).

This sequence belongs to the ATPase alpha/beta chains family. As to quaternary structure, F-type ATPases have 2 components, CF(1) - the catalytic core - and CF(0) - the membrane proton channel. CF(1) has five subunits: alpha(3), beta(3), gamma(1), delta(1), epsilon(1). CF(0) has three main subunits: a(1), b(2) and c(9-12). The alpha and beta chains form an alternating ring which encloses part of the gamma chain. CF(1) is attached to CF(0) by a central stalk formed by the gamma and epsilon chains, while a peripheral stalk is formed by the delta and b chains.

The protein resides in the cell membrane. It catalyses the reaction ATP + H2O + 4 H(+)(in) = ADP + phosphate + 5 H(+)(out). Its function is as follows. Produces ATP from ADP in the presence of a proton gradient across the membrane. The catalytic sites are hosted primarily by the beta subunits. The polypeptide is ATP synthase subunit beta (Bacillus caldotenax).